The following is a 357-amino-acid chain: Holliday junction branch migration complex subunit RuvB (357 aa).

The segment at 1-27 (MGRFDDAGAQDAEPDDRDVSPALTVGE) is disordered. Residues 1–195 (MGRFDDAGAQ…FGFTAHMDFY (195 aa)) are large ATPase domain (RuvB-L). ATP contacts are provided by residues leucine 34, arginine 35, glycine 76, lysine 79, threonine 80, serine 81, 142–144 (EDF), arginine 185, tyrosine 195, and arginine 232. Threonine 80 serves as a coordination point for Mg(2+). Residues 196–266 (EPAELERVLA…IAKAALEVYD (71 aa)) form a small ATPAse domain (RuvB-S) region. The head domain (RuvB-H) stretch occupies residues 269-357 (ELGLDRLDRA…TGLGQTGLFD (89 aa)). DNA is bound by residues arginine 324 and arginine 329.

The protein belongs to the RuvB family. Homohexamer. Forms an RuvA(8)-RuvB(12)-Holliday junction (HJ) complex. HJ DNA is sandwiched between 2 RuvA tetramers; dsDNA enters through RuvA and exits via RuvB. An RuvB hexamer assembles on each DNA strand where it exits the tetramer. Each RuvB hexamer is contacted by two RuvA subunits (via domain III) on 2 adjacent RuvB subunits; this complex drives branch migration. In the full resolvosome a probable DNA-RuvA(4)-RuvB(12)-RuvC(2) complex forms which resolves the HJ.

It is found in the cytoplasm. It catalyses the reaction ATP + H2O = ADP + phosphate + H(+). Its function is as follows. The RuvA-RuvB-RuvC complex processes Holliday junction (HJ) DNA during genetic recombination and DNA repair, while the RuvA-RuvB complex plays an important role in the rescue of blocked DNA replication forks via replication fork reversal (RFR). RuvA specifically binds to HJ cruciform DNA, conferring on it an open structure. The RuvB hexamer acts as an ATP-dependent pump, pulling dsDNA into and through the RuvAB complex. RuvB forms 2 homohexamers on either side of HJ DNA bound by 1 or 2 RuvA tetramers; 4 subunits per hexamer contact DNA at a time. Coordinated motions by a converter formed by DNA-disengaged RuvB subunits stimulates ATP hydrolysis and nucleotide exchange. Immobilization of the converter enables RuvB to convert the ATP-contained energy into a lever motion, pulling 2 nucleotides of DNA out of the RuvA tetramer per ATP hydrolyzed, thus driving DNA branch migration. The RuvB motors rotate together with the DNA substrate, which together with the progressing nucleotide cycle form the mechanistic basis for DNA recombination by continuous HJ branch migration. Branch migration allows RuvC to scan DNA until it finds its consensus sequence, where it cleaves and resolves cruciform DNA. The protein is Holliday junction branch migration complex subunit RuvB of Mycobacterium sp. (strain JLS).